The chain runs to 122 residues: T cell receptor gamma variable 9 (122 aa).

The signal sequence occupies residues 1 to 20 (MLSLLHTSTLAVLGALCVYG). In terms of domain architecture, Ig-like spans 27–122 (PQISSTKTLS…ATYYCALWEV (96 aa)). Cys43 and Cys117 form a disulfide bridge.

As to quaternary structure, gamma-delta TR is a heterodimer composed of a gamma and delta chain; disulfide-linked. The gamma-delta TR is associated with the transmembrane signaling CD3 coreceptor proteins following the stoichiometry: a single gamma-delta TR heterodimer associates with one CD3D-CD3E heterodimer, one CD3G-CD3E heterodimer and one CD247 homodimer forming a stable octameric structure. Upon activation, gamma-delta TR complex associates with FCER1G to initiate intracellular signaling.

It is found in the cell membrane. Functionally, v region of the variable domain of T cell receptor (TR) gamma chain that participates in the antigen recognition. Gamma-delta TRs recognize a variety of self and foreign non-peptide antigens frequently expressed at the epithelial boundaries between the host and external environment, including endogenous lipids presented by MH-like protein CD1D and phosphoantigens presented by butyrophilin-like molecule BTN3A1. Upon antigen recognition induces rapid, innate-like immune responses involved in pathogen clearance and tissue repair. Binding of gamma-delta TR complex to antigen triggers phosphorylation of immunoreceptor tyrosine-based activation motifs (ITAMs) in the CD3 chains by the LCK and FYN kinases, allowing the recruitment, phosphorylation, and activation of ZAP70 that facilitates phosphorylation of the scaffolding proteins LCP2 and LAT. This lead to the formation of a supramolecular signalosome that recruits the phospholipase PLCG1, resulting in calcium mobilization and ERK activation, ultimately leading to T cell expansion and differentiation into effector cells. Gamma-delta TRs are produced through somatic rearrangement of a limited repertoire of variable (V), diversity (D), and joining (J) genes. The potential diversity of gamma-delta TRs is conferred by the unique ability to rearrange (D) genes in tandem and to utilize all three reading frames. The combinatorial diversity is considerably increased by the sequence exonuclease trimming and random nucleotide (N) region additions which occur during the V-(D)-J rearrangements. This is T cell receptor gamma variable 9 from Homo sapiens (Human).